Reading from the N-terminus, the 5875-residue chain is Probable E3 ubiquitin-protein ligase DDB_G0283893 (5875 aa).

15 disordered regions span residues 17 to 64, 164 to 185, 232 to 276, 302 to 342, 642 to 693, 716 to 740, 1081 to 1101, 1291 to 1367, 1806 to 1851, 1952 to 1982, 2008 to 2036, 2109 to 2203, 2893 to 2930, 3083 to 3119, and 3195 to 3214; these read DNNN…QPPE, NNNNNNDNNSNNKTDDNNQSNN, DSNN…TTTS, PSFK…CGNG, TTTT…SPPI, SIRSSSNKVNEGTPKSSTTTTTTNA, ITPTNTTTTTTTTTPSTTSIP, DGWE…KEST, QESE…SSPP, KKPSSDQQHHSGGCHHSNHHHHHHHSRKDEV, EDEDELQYLSEDEKVVNGNENTGEEDDEE, KALK…TGSG, DSDDSDDEFPTVDENVTSSGLSTSAGGSGGGVAGTNDS, TSPSSSKGKSSSASASSSSSTTTATSTLPSNTQSGSN, and LLPPPSSSSNENVVDNDNTN. Low complexity predominate over residues 18-52; it reads NNNNNNNNNNNNNNNNNNNNNNNNNNNSNNNNNKN. Basic and acidic residues predominate over residues 237–249; it reads DNKENKKEDKESS. 3 stretches are compositionally biased toward low complexity: residues 250–276, 317–333, and 642–656; these read KPIASSPIPITTTNIEKPTIATTTTTS, TSTITTQPLPSSTITQP, and TTTTTATTTTTTTTT. The span at 657–669 shows a compositional bias: polar residues; that stretch reads NESIPMETTRSST. The segment covering 670-693 has biased composition (low complexity); the sequence is PIPIVNNNNNNNDSKSNSKKSPPI. The span at 716-725 shows a compositional bias: polar residues; it reads SIRSSSNKVN. The span at 728–740 shows a compositional bias: low complexity; that stretch reads TPKSSTTTTTTNA. Acidic residues predominate over residues 1297-1330; that stretch reads FNDDDDEEEDEEEEEEMDEDDSENDEDEDSEESE. Residues 1300–1328 are a coiled coil; that stretch reads DDDEEEDEEEEEEMDEDDSENDEDEDSEE. Composition is skewed to low complexity over residues 1347–1363 and 1838–1851; these read TTTTTAAAATTTATATT and SNSSPALTASSSPP. Residues 1963–1977 show a composition bias toward basic residues; sequence GGCHHSNHHHHHHHS. Residues 2042-2113 form a UBR-type zinc finger; sequence KVCTYTFTKN…KGNPCKALKP (72 aa). Low complexity-rich tracts occupy residues 2118-2168 and 2178-2203; these read PPKQ…TNTN and SSSSSNSSPSFNNNNNNNNNGTTGSG. The span at 2893 to 2903 shows a compositional bias: acidic residues; that stretch reads DSDDSDDEFPT. A compositionally biased stretch (low complexity) spans 2908–2917; the sequence is VTSSGLSTSA. The span at 3201 to 3211 shows a compositional bias: low complexity; the sequence is SSSNENVVDND. The segment at 3226-3280 adopts a ZZ-type zinc-finger fold; that stretch reads EVLFSCDLCNINPITGKRWNCSNCGDFDLCNQCYQNPEKDHPKDHIFKEFIIDEP. Positions 3231, 3234, 3246, 3249, 3255, 3258, 3266, and 3270 each coordinate Zn(2+). Disordered stretches follow at residues 3282–3312, 3326–3359, and 3754–3776; these read KDGDEKESTNEPPQQQKQQDQQLQQDLQDDS, LNNNNNNNNNNESMDTSTLTTTTTTTNKTTPTTN, and SSTSQDTQQESSNNNNNNNSNDI. Low complexity-rich tracts occupy residues 3295 to 3307 and 3327 to 3358; these read QQQKQQDQQLQQD and NNNNNNNNNNESMDTSTLTTTTTTTNKTTPTT. A UIM domain is found at 3313–3332; that stretch reads EYDEELKIAISMSLNNNNNN. Residues 3754 to 3763 show a composition bias toward polar residues; sequence SSTSQDTQQE. Low complexity predominate over residues 3764–3774; sequence SSNNNNNNNSN. A coiled-coil region spans residues 4118–4146; sequence IENQEDHKRAIQTIEKESENAHKKYQRLI. Residues 4182 to 4222 show a composition bias toward low complexity; sequence NTSTNSTGSNNQSINSSSGNISTNSSSSSSSSFGISNQSSS. Disordered regions lie at residues 4182–4237, 4295–4323, and 4616–4671; these read NTST…GGVI, FISGGGQPSSNDKQQQQQQQQQQSSRQCP, and KILS…FDND. Residues 4223 to 4236 are compositionally biased toward gly residues; that stretch reads GNGGGGVGSGGGGV. A compositionally biased stretch (low complexity) spans 4308–4317; the sequence is QQQQQQQQQQ. Residues 4585–4618 adopt a coiled-coil conformation; that stretch reads QIQQQIALQQQQIQQQIQQQQQQLNESVSGLKIL. 2 stretches are compositionally biased toward low complexity: residues 4619-4635 and 4645-4659; these read SPSSSSSSPSGVGATGS and SSGSSVSGSGSISSS. Residues 5357 to 5870 form a UBR4 E3 catalytic module region; that stretch reads PALPFVLVLL…EYLLKLYKSV (514 aa). The HemiRING-type zinc finger occupies 5476–5620; sequence GFTCMVCREG…WVNLNNISRV (145 aa). Positions 5479, 5482, 5554, and 5557 each coordinate Zn(2+). The 248-residue stretch at 5623-5870 folds into the UZI domain; it reads PKFRILSHDL…EYLLKLYKSV (248 aa). A coiled-coil region spans residues 5819 to 5846; it reads QVDVKELLNCFENELKEFQDEMEFFDDE.

This sequence belongs to the UBR4 family.

It participates in protein modification; protein ubiquitination. In terms of biological role, probable E3 ubiquitin-protein ligase. The chain is Probable E3 ubiquitin-protein ligase DDB_G0283893 from Dictyostelium discoideum (Social amoeba).